The primary structure comprises 541 residues: 2-succinyl-5-enolpyruvyl-6-hydroxy-3-cyclohexene-1-carboxylate synthase (541 aa).

The protein belongs to the TPP enzyme family. MenD subfamily. In terms of assembly, homodimer. Requires Mg(2+) as cofactor. The cofactor is Mn(2+). Thiamine diphosphate is required as a cofactor.

The catalysed reaction is isochorismate + 2-oxoglutarate + H(+) = 5-enolpyruvoyl-6-hydroxy-2-succinyl-cyclohex-3-ene-1-carboxylate + CO2. Its pathway is quinol/quinone metabolism; 1,4-dihydroxy-2-naphthoate biosynthesis; 1,4-dihydroxy-2-naphthoate from chorismate: step 2/7. It functions in the pathway quinol/quinone metabolism; menaquinone biosynthesis. Functionally, catalyzes the thiamine diphosphate-dependent decarboxylation of 2-oxoglutarate and the subsequent addition of the resulting succinic semialdehyde-thiamine pyrophosphate anion to isochorismate to yield 2-succinyl-5-enolpyruvyl-6-hydroxy-3-cyclohexene-1-carboxylate (SEPHCHC). In Leuconostoc mesenteroides subsp. mesenteroides (strain ATCC 8293 / DSM 20343 / BCRC 11652 / CCM 1803 / JCM 6124 / NCDO 523 / NBRC 100496 / NCIMB 8023 / NCTC 12954 / NRRL B-1118 / 37Y), this protein is 2-succinyl-5-enolpyruvyl-6-hydroxy-3-cyclohexene-1-carboxylate synthase.